The primary structure comprises 485 residues: Glutamyl-tRNA(Gln) amidotransferase subunit A (485 aa).

Residues lysine 74 and serine 149 each act as charge relay system in the active site. Residue serine 173 is the Acyl-ester intermediate of the active site.

This sequence belongs to the amidase family. GatA subfamily. Heterotrimer of A, B and C subunits.

It carries out the reaction L-glutamyl-tRNA(Gln) + L-glutamine + ATP + H2O = L-glutaminyl-tRNA(Gln) + L-glutamate + ADP + phosphate + H(+). Its function is as follows. Allows the formation of correctly charged Gln-tRNA(Gln) through the transamidation of misacylated Glu-tRNA(Gln) in organisms which lack glutaminyl-tRNA synthetase. The reaction takes place in the presence of glutamine and ATP through an activated gamma-phospho-Glu-tRNA(Gln). The chain is Glutamyl-tRNA(Gln) amidotransferase subunit A from Herminiimonas arsenicoxydans.